A 512-amino-acid polypeptide reads, in one-letter code: Cytochrome P450 1A1 (512 aa).

The segment at 29–40 is mitochondrial targeting signal; it reads SRPRVPKGLKNP. S67 carries an O-linked (GlcNAc) serine glycan. Residue F224 coordinates substrate. C457 lines the heme pocket.

It belongs to the cytochrome P450 family. Interacts with cytosolic chaperones HSP70 and HSP90; this interaction is required for initial targeting to mitochondria. Interacts (via mitochondrial targeting signal) with TOMM40 (via N-terminus); this interaction is required for translocation across the mitochondrial outer membrane. Requires heme as cofactor.

Its subcellular location is the endoplasmic reticulum membrane. The protein localises to the mitochondrion inner membrane. The protein resides in the microsome membrane. It localises to the cytoplasm. It catalyses the reaction an organic molecule + reduced [NADPH--hemoprotein reductase] + O2 = an alcohol + oxidized [NADPH--hemoprotein reductase] + H2O + H(+). It carries out the reaction estrone + reduced [NADPH--hemoprotein reductase] + O2 = 2-hydroxyestrone + oxidized [NADPH--hemoprotein reductase] + H2O + H(+). The enzyme catalyses estrone + reduced [NADPH--hemoprotein reductase] + O2 = 4-hydroxyestrone + oxidized [NADPH--hemoprotein reductase] + H2O + H(+). The catalysed reaction is estrone + reduced [NADPH--hemoprotein reductase] + O2 = 6alpha-hydroxyestrone + oxidized [NADPH--hemoprotein reductase] + H2O + H(+). It catalyses the reaction estrone + reduced [NADPH--hemoprotein reductase] + O2 = 15alpha-hydroxyestrone + oxidized [NADPH--hemoprotein reductase] + H2O + H(+). It carries out the reaction estrone + reduced [NADPH--hemoprotein reductase] + O2 = 16alpha-hydroxyestrone + oxidized [NADPH--hemoprotein reductase] + H2O + H(+). The enzyme catalyses 17beta-estradiol + reduced [NADPH--hemoprotein reductase] + O2 = 2-hydroxy-17beta-estradiol + oxidized [NADPH--hemoprotein reductase] + H2O + H(+). The catalysed reaction is 17beta-estradiol + reduced [NADPH--hemoprotein reductase] + O2 = 4-hydroxy-17beta-estradiol + oxidized [NADPH--hemoprotein reductase] + H2O + H(+). It catalyses the reaction 17beta-estradiol + reduced [NADPH--hemoprotein reductase] + O2 = 6alpha-hydroxy-17beta-estradiol + oxidized [NADPH--hemoprotein reductase] + H2O + H(+). It carries out the reaction 17beta-estradiol + reduced [NADPH--hemoprotein reductase] + O2 = 7alpha-hydroxy-17beta-estradiol + oxidized [NADPH--hemoprotein reductase] + H2O + H(+). The enzyme catalyses 17beta-estradiol + reduced [NADPH--hemoprotein reductase] + O2 = 15alpha-hydroxy-17beta-estradiol + oxidized [NADPH--hemoprotein reductase] + H2O + H(+). The catalysed reaction is (5Z,8Z,11Z)-eicosatrienoate + reduced [NADPH--hemoprotein reductase] + O2 = 19-hydroxy-(5Z,8Z,11Z)-eicosatrienoate + oxidized [NADPH--hemoprotein reductase] + H2O + H(+). It catalyses the reaction (5Z,8Z,11Z,14Z)-eicosatetraenoate + reduced [NADPH--hemoprotein reductase] + O2 = 16-hydroxy-(5Z,8Z,11Z,14Z)-eicosatetraenoate + oxidized [NADPH--hemoprotein reductase] + H2O + H(+). It carries out the reaction (5Z,8Z,11Z,14Z)-eicosatetraenoate + reduced [NADPH--hemoprotein reductase] + O2 = 17-hydroxy-(5Z,8Z,11Z,14Z)-eicosatetraenoate + oxidized [NADPH--hemoprotein reductase] + H2O + H(+). The enzyme catalyses (5Z,8Z,11Z,14Z)-eicosatetraenoate + reduced [NADPH--hemoprotein reductase] + O2 = 18-hydroxy-(5Z,8Z,11Z,14Z)-eicosatetraenoate + oxidized [NADPH--hemoprotein reductase] + H2O + H(+). The catalysed reaction is (5Z,8Z,11Z,14Z)-eicosatetraenoate + reduced [NADPH--hemoprotein reductase] + O2 = 19-hydroxy-(5Z,8Z,11Z,14Z)-eicosatetraenoate + oxidized [NADPH--hemoprotein reductase] + H2O + H(+). It catalyses the reaction (5Z,8Z,11Z,14Z,17Z)-eicosapentaenoate + reduced [NADPH--hemoprotein reductase] + O2 = 19-hydroxy-(5Z,8Z,11Z,14Z,17Z)-eicosapentaenoate + oxidized [NADPH--hemoprotein reductase] + H2O + H(+). It carries out the reaction (5Z,8Z,11Z,14Z)-eicosatetraenoate + reduced [NADPH--hemoprotein reductase] + O2 = (8R,9S)-epoxy-(5Z,11Z,14Z)-eicosatrienoate + oxidized [NADPH--hemoprotein reductase] + H2O + H(+). The enzyme catalyses (5Z,8Z,11Z,14Z)-eicosatetraenoate + reduced [NADPH--hemoprotein reductase] + O2 = (11R,12S)-epoxy-(5Z,8Z,14Z)-eicosatrienoate + oxidized [NADPH--hemoprotein reductase] + H2O + H(+). The catalysed reaction is (5Z,8Z,11Z,14Z)-eicosatetraenoate + reduced [NADPH--hemoprotein reductase] + O2 = (14S,15R)-epoxy-(5Z,8Z,11Z)-eicosatrienoate + oxidized [NADPH--hemoprotein reductase] + H2O + H(+). It catalyses the reaction (5Z,8Z,11Z,14Z)-eicosatetraenoate + reduced [NADPH--hemoprotein reductase] + O2 = (14R,15S)-epoxy-(5Z,8Z,11Z)-eicosatrienoate + oxidized [NADPH--hemoprotein reductase] + H2O + H(+). It carries out the reaction (5Z,8Z,11Z,14Z,17Z)-eicosapentaenoate + reduced [NADPH--hemoprotein reductase] + O2 = (17R,18S)-epoxy-(5Z,8Z,11Z,14Z)-eicosatetraenoate + oxidized [NADPH--hemoprotein reductase] + H2O + H(+). The enzyme catalyses (4Z,7Z,10Z,13Z,16Z,19Z)-docosahexaenoate + reduced [NADPH--hemoprotein reductase] + O2 = (19S,20R)-epoxy-(4Z,7Z,10Z,13Z,16Z)-docosapentaenoate + oxidized [NADPH--hemoprotein reductase] + H2O + H(+). The catalysed reaction is (4Z,7Z,10Z,13Z,16Z,19Z)-docosahexaenoate + reduced [NADPH--hemoprotein reductase] + O2 = (19R,20S)-epoxy-(4Z,7Z,10Z,13Z,16Z)-docosapentaenoate + oxidized [NADPH--hemoprotein reductase] + H2O + H(+). It catalyses the reaction all-trans-retinol + reduced [NADPH--hemoprotein reductase] + O2 = all-trans-retinal + oxidized [NADPH--hemoprotein reductase] + 2 H2O + H(+). It carries out the reaction all-trans-retinal + reduced [NADPH--hemoprotein reductase] + O2 = all-trans-retinoate + oxidized [NADPH--hemoprotein reductase] + H2O + 2 H(+). The enzyme catalyses (13S)-hydroperoxy-(9Z,11E)-octadecadienoate = 13-oxo-(9Z,11E)-octadecadienoate + H2O. The catalysed reaction is (12S)-hydroperoxy-(5Z,8Z,10E,14Z)-eicosatetraenoate = 12-oxo-(5Z,8Z,10E,14Z)-eicosatetraenoate + H2O. It catalyses the reaction (15S)-hydroperoxy-(5Z,8Z,11Z,13E)-eicosatetraenoate = 15-oxo-(5Z,8Z,11Z,13E)-eicosatetraenoate + H2O. It carries out the reaction (5S)-hydroperoxy-(6E,8Z,11Z,14Z)-eicosatetraenoate = 5-oxo-(6E,8Z,11Z,14Z)-eicosatetraenoate + H2O. Its pathway is steroid hormone biosynthesis. The protein operates within lipid metabolism; fatty acid metabolism. It participates in cofactor metabolism; retinol metabolism. Its function is as follows. A cytochrome P450 monooxygenase involved in the metabolism of various endogenous substrates, including fatty acids, steroid hormones and vitamins. Mechanistically, uses molecular oxygen inserting one oxygen atom into a substrate, and reducing the second into a water molecule, with two electrons provided by NADPH via cytochrome P450 reductase (CPR; NADPH-ferrihemoprotein reductase). Catalyzes the hydroxylation of carbon-hydrogen bonds. Exhibits high catalytic activity for the formation of hydroxyestrogens from estrone (E1) and 17beta-estradiol (E2), namely 2-hydroxy E1 and E2, as well as D-ring hydroxylated E1 and E2 at the C15alpha and C16alpha positions. Displays different regioselectivities for polyunsaturated fatty acids (PUFA) hydroxylation. Catalyzes the epoxidation of double bonds of certain PUFA. Converts arachidonic acid toward epoxyeicosatrienoic acid (EET) regioisomers, 8,9-, 11,12-, and 14,15-EET, that function as lipid mediators in the vascular system. Displays an absolute stereoselectivity in the epoxidation of eicosapentaenoic acid (EPA) producing the 17(R),18(S) enantiomer. May play an important role in all-trans retinoic acid biosynthesis in extrahepatic tissues. Catalyzes two successive oxidative transformation of all-trans retinol to all-trans retinal and then to the active form all-trans retinoic acid. May also participate in eicosanoids metabolism by converting hydroperoxide species into oxo metabolites (lipoxygenase-like reaction, NADPH-independent). This is Cytochrome P450 1A1 (CYP1A1) from Macaca fascicularis (Crab-eating macaque).